The following is a 1227-amino-acid chain: Methionine synthase (1227 aa).

A Hcy-binding domain is found at 2–325 (SSKVEQLRAQ…EHIAAMSRAV (324 aa)). Zn(2+) is bound by residues C247, C310, and C311. Residues 356–617 (FVNVGERTNV…LPAELRDAVE (262 aa)) form the Pterin-binding domain. The region spanning 650 to 744 (QQAEWRSWDV…FIEASKEKGS (95 aa)) is the B12-binding N-terminal domain. Residues E694, 756-760 (GDVHD), H759, S804, T808, and A860 each bind methylcob(III)alamin. A B12-binding domain is found at 746–881 (NGKMVIATVK…SDTQRDDFVA (136 aa)). Residues 897-1227 (KKPRTPPVTL…LAPNLGYDAD (331 aa)) enclose the AdoMet activation domain. S-adenosyl-L-methionine contacts are provided by residues D946, R1134, and 1189–1190 (YF).

This sequence belongs to the vitamin-B12 dependent methionine synthase family. It depends on methylcob(III)alamin as a cofactor. Zn(2+) serves as cofactor.

The enzyme catalyses (6S)-5-methyl-5,6,7,8-tetrahydrofolate + L-homocysteine = (6S)-5,6,7,8-tetrahydrofolate + L-methionine. It participates in amino-acid biosynthesis; L-methionine biosynthesis via de novo pathway; L-methionine from L-homocysteine (MetH route): step 1/1. Its function is as follows. Catalyzes the transfer of a methyl group from methyl-cobalamin to homocysteine, yielding enzyme-bound cob(I)alamin and methionine. Subsequently, remethylates the cofactor using methyltetrahydrofolate. The polypeptide is Methionine synthase (metH) (Salmonella typhimurium (strain LT2 / SGSC1412 / ATCC 700720)).